The primary structure comprises 494 residues: UDP-N-acetylmuramoyl-L-alanyl-D-glutamate--L-lysine ligase (494 aa).

Position 30 (Ser-30) interacts with UDP-N-acetyl-alpha-D-muramoyl-L-alanyl-D-glutamate. Residue Gly-110–Ser-116 coordinates ATP. UDP-N-acetyl-alpha-D-muramoyl-L-alanyl-D-glutamate is bound by residues Thr-152–Thr-153, Ser-179, and Arg-187. The residue at position 219 (Lys-219) is an N6-carboxylysine. Residues Asp-406–Ala-409 carry the L-lysine recognition motif motif.

Belongs to the MurCDEF family. MurE subfamily. Carboxylation is probably crucial for Mg(2+) binding and, consequently, for the gamma-phosphate positioning of ATP.

Its subcellular location is the cytoplasm. The enzyme catalyses UDP-N-acetyl-alpha-D-muramoyl-L-alanyl-D-glutamate + L-lysine + ATP = UDP-N-acetyl-alpha-D-muramoyl-L-alanyl-gamma-D-glutamyl-L-lysine + ADP + phosphate + H(+). It functions in the pathway cell wall biogenesis; peptidoglycan biosynthesis. Catalyzes the addition of L-lysine to the nucleotide precursor UDP-N-acetylmuramoyl-L-alanyl-D-glutamate (UMAG) in the biosynthesis of bacterial cell-wall peptidoglycan. In Staphylococcus aureus (strain MW2), this protein is UDP-N-acetylmuramoyl-L-alanyl-D-glutamate--L-lysine ligase.